Reading from the N-terminus, the 883-residue chain is DNA double-strand break repair Rad50 ATPase (883 aa).

ATP is bound by residues arginine 12, 32–38, and glutamine 134; that span reads NGSGKSS. Residues 218-420 are a coiled coil; it reads ELRGELGGLE…EIGSRRGELK (203 aa). Residues 395–492 enclose the Zinc-hook domain; sequence IQKARERKEE…ELVEVEKTLK (98 aa). Zn(2+) is bound by residues cysteine 440 and cysteine 443. Coiled coils occupy residues 452–585 and 620–741; these read RKEL…KKLG and EDLL…LLKE. 790 to 795 serves as a coordination point for ATP; it reads FLSGGE.

Belongs to the SMC family. RAD50 subfamily. As to quaternary structure, homodimer. Forms a heterotetramer composed of two Mre11 subunits and two Rad50 subunits. The cofactor is Zn(2+).

Part of the Rad50/Mre11 complex, which is involved in the early steps of DNA double-strand break (DSB) repair. The complex may facilitate opening of the processed DNA ends to aid in the recruitment of HerA and NurA. Rad50 controls the balance between DNA end bridging and DNA resection via ATP-dependent structural rearrangements of the Rad50/Mre11 complex. This chain is DNA double-strand break repair Rad50 ATPase, found in Thermococcus kodakarensis (strain ATCC BAA-918 / JCM 12380 / KOD1) (Pyrococcus kodakaraensis (strain KOD1)).